We begin with the raw amino-acid sequence, 309 residues long: NAD kinase 2 (309 aa).

The active-site Proton acceptor is the D81. Residues 81 to 82 (DG), 155 to 156 (NE), D185, 196 to 201 (TAYALS), and N255 each bind NAD(+).

Belongs to the NAD kinase family. The cofactor is a divalent metal cation.

The protein resides in the cytoplasm. It carries out the reaction NAD(+) + ATP = ADP + NADP(+) + H(+). Its function is as follows. Involved in the regulation of the intracellular balance of NAD and NADP, and is a key enzyme in the biosynthesis of NADP. Catalyzes specifically the phosphorylation on 2'-hydroxyl of the adenosine moiety of NAD to yield NADP. This Gloeobacter violaceus (strain ATCC 29082 / PCC 7421) protein is NAD kinase 2.